Here is a 500-residue protein sequence, read N- to C-terminus: Organic cation/carnitine transporter 7 (500 aa).

Residues 1–23 (MADGNTRFTVDEALVAMGFGKFQ) lie on the Cytoplasmic side of the membrane. Residues 24–44 (IYVLAYAGMGWVAEAMEMMLL) traverse the membrane as a helical segment. Residues 45-62 (SFVGPAVQSLWNLSARQE) are Extracellular-facing. The N-linked (GlcNAc...) asparagine glycan is linked to N56. The chain crosses the membrane as a helical span at residues 63–83 (SLITSVVFAGMLIGAYSWGIV). Over 84-97 (SDKHGRRKGFIITA) the chain is Cytoplasmic. A helical membrane pass occupies residues 98–118 (VVTFVAGFLSAFSPNYMWLII). The Extracellular segment spans residues 119–120 (LR). A helical membrane pass occupies residues 121–141 (CLVGLGLGGGPVLASWYLEFI). 137–144 (YLEFIPAP) provides a ligand contact to ATP. Residues 142–150 (PAPSRGTWM) lie on the Cytoplasmic side of the membrane. Residues 151-171 (VVFSAFWTVGTIFEASLAWLV) traverse the membrane as a helical segment. Residues 172–174 (MPR) lie on the Extracellular side of the membrane. The helical transmembrane segment at 175–195 (LGWRWLLAFSSVPSSLLLLFY) threads the bilayer. Residues 196 to 293 (RWTSESPRYL…ALLSPTLMKR (98 aa)) lie on the Cytoplasmic side of the membrane. A helical membrane pass occupies residues 294–314 (TLLLWVVFFGNAFAYYGVVLL). Residues 315 to 341 (TTELNNSHNRCYPTEKQLRNSNDVNYR) lie on the Extracellular side of the membrane. Residue N319 is glycosylated (N-linked (GlcNAc...) asparagine). Residues 342 to 362 (DVFIASFAEFPGLLISAAMVD) form a helical membrane-spanning segment. Topologically, residues 363–367 (RLGRK) are cytoplasmic. The chain crosses the membrane as a helical span at residues 368-387 (ASMASMLFTCCIFLLPLLSH). The Extracellular portion of the chain corresponds to 388–401 (QSPFITTVLLFGGR). The helical transmembrane segment at 402 to 422 (ICISAAFTVVYIYAPEIYPTA) threads the bilayer. Over 423-429 (VRTTGVG) the chain is Cytoplasmic. The helical transmembrane segment at 430–450 (VGSSVGRIGGILCPLVAVGLV) threads the bilayer. Topologically, residues 451-456 (HGCHQT) are extracellular. The chain crosses the membrane as a helical span at residues 457 to 477 (IAVLLFEVVILVSGICVCLFP). Residues 478–500 (FETSGRDLTDSISASKEPPSASV) lie on the Cytoplasmic side of the membrane.

Belongs to the major facilitator (TC 2.A.1) superfamily. Organic cation transporter (TC 2.A.1.19) family. As to expression, expressed in pollen.

Its subcellular location is the membrane. Functionally, high affinity carnitine transporter involved in the active cellular uptake of carnitine. Also transports organic cations. The sequence is that of Organic cation/carnitine transporter 7 (OCT7) from Arabidopsis thaliana (Mouse-ear cress).